Reading from the N-terminus, the 384-residue chain is Carbazole 1,9a-dioxygenase, terminal oxygenase component CarAa (384 aa).

One can recognise a Rieske domain in the interval W29–I135. The [2Fe-2S] cluster site is built by C69, H71, C90, and H93.

As to quaternary structure, homotrimer. Carbazole 1,9a-dioxygenase complex consists of a terminal oxygenase component CarAa, a ferredoxin reductase component CarAd and a ferredoxin component CarAc. It depends on [2Fe-2S] cluster as a cofactor.

The enzyme catalyses 9H-carbazole + NADH + O2 + H(+) = 2'-aminobiphenyl-2,3-diol + NAD(+). The catalysed reaction is 9H-carbazole + NADPH + O2 + H(+) = 2'-aminobiphenyl-2,3-diol + NADP(+). Functionally, part of the multicomponent carbazole 1,9a-dioxygenase (CARDO), that converts carbazole (CAR) into 2-aminobiphenyl-2,3-diol. Catalyzes the dioxygenation at the angular (C-9a) and adjacent (C-1) positions of carbazole to yield a highly unstable cis-hydrodiol intermediate which is spontaneously converted to 2-aminobiphenyl-2,3-diol. It is also able to attack the angular position adjacent of hetero atom of heterocyclic aromatic compounds such as polychlorinated dibenzo-p-dioxin (DD) and dibenzofuran (DBF). It was also shown that CARDO has the ability to metabolize biphenyl and polycyclic aromatic hydrocarbons, such as naphthalene and phenanthrene. The chain is Carbazole 1,9a-dioxygenase, terminal oxygenase component CarAa (carAa) from Metapseudomonas resinovorans (Pseudomonas resinovorans).